Consider the following 420-residue polypeptide: Enolase (420 aa).

Gln-162 is a binding site for (2R)-2-phosphoglycerate. Glu-206 serves as the catalytic Proton donor. Asp-241, Glu-282, and Asp-308 together coordinate Mg(2+). (2R)-2-phosphoglycerate is bound by residues Lys-333, Arg-362, Ser-363, and Lys-384. Residue Lys-333 is the Proton acceptor of the active site.

Belongs to the enolase family. It depends on Mg(2+) as a cofactor.

It localises to the cytoplasm. Its subcellular location is the secreted. The protein resides in the cell surface. The catalysed reaction is (2R)-2-phosphoglycerate = phosphoenolpyruvate + H2O. It participates in carbohydrate degradation; glycolysis; pyruvate from D-glyceraldehyde 3-phosphate: step 4/5. In terms of biological role, catalyzes the reversible conversion of 2-phosphoglycerate (2-PG) into phosphoenolpyruvate (PEP). It is essential for the degradation of carbohydrates via glycolysis. This Methanothrix thermoacetophila (strain DSM 6194 / JCM 14653 / NBRC 101360 / PT) (Methanosaeta thermophila) protein is Enolase.